Consider the following 458-residue polypeptide: Histone acetyltransferase KAT8 (458 aa).

Low complexity-rich tracts occupy residues 1–17 (MAAQGATAAVAATTSGT) and 25–35 (PGENAAVEGPA). The segment at 1–52 (MAAQGATAAVAATTSGTVGEGEPGPGENAAVEGPARSPGRVSPPTPARGEPE) is disordered. Ala-2 is modified (N-acetylalanine). 2 positions are modified to phosphoserine: Ser-37 and Ser-42. The Tudor-knot domain maps to 55 to 110 (VEIGETYLCRRPDSTWHSAEVIQSRVNDQEGREEFYVHYVGFNRRLDEWVDKNRLA). At Lys-113 the chain carries N6-acetyllysine. A Nuclear localization signal motif is present at residues 140-149 (RNQKRKHDEI). The MYST-type HAT domain occupies 174–447 (TKVKYVDKIH…VDSVCLKWAP (274 aa)). The sufficient for interaction with KANSL1 stretch occupies residues 174 to 458 (TKVKYVDKIH…KHKQVKLSKK (285 aa)). The segment at 207 to 232 (LWLCEYCLKYMKFEKSYRFHLGQCQW) adopts a C2HC MYST-type zinc-finger fold. The Zn(2+) site is built by Cys-210, Cys-213, His-226, and Cys-230. Lys-274 bears the N6-acetyllysine mark. Positions 317, 319, 325, 326, 327, 329, and 330 each coordinate acetyl-CoA. Phosphoserine is present on Ser-348. Glu-350 serves as the catalytic Proton donor/acceptor. Residues Ser-354, Ser-363, Tyr-408, and Lys-432 each coordinate acetyl-CoA.

It belongs to the MYST (SAS/MOZ) family. As to quaternary structure, component of a multisubunit histone acetyltransferase complex (MSL) at least composed of the MOF/KAT8, MSL1/hampin, MSL2L1 and MSL3L1. Component of the NSL complex at least composed of MOF/KAT8, KANSL1, KANSL2, KANSL3, MCRS1, PHF20, OGT1/OGT, WDR5 and HCFC1. Component of some MLL1/MLL complex, at least composed of the core components KMT2A/MLL1, ASH2L, HCFC1, WDR5 and RBBP5, as well as the facultative components BACC1, CHD8, E2F6, HSP70, INO80C, KANSL1, LAS1L, MAX, MCRS1, MGA, MOF/KAT8, PELP1, PHF20, PRP31, RING2, RUVB1/TIP49A, RUVB2/TIP49B, SENP3, TAF1, TAF4, TAF6, TAF7, TAF9 and TEX10. Interacts with the chromodomain of MORF4L1/MRG15. Interacts with ATM (via its Tudor-knot domain); possibly regulating the activity of ATM. Interacts with NELFD. Acetylation at Lys-274 facilitates cognate substrate Lys-binding and acetylation. Although considered as an autoacetylation event, acetylation at Lys-274 probably takes place via a non-enzymatic process following acetyl-CoA-binding, which primes KAT8 for cognate protein-lysine acetylation. In terms of tissue distribution, during oocyte development, expressed in both oocytes and granulosa cells.

It localises to the nucleus. The protein resides in the chromosome. Its subcellular location is the mitochondrion. The enzyme catalyses L-lysyl-[histone] + acetyl-CoA = N(6)-acetyl-L-lysyl-[histone] + CoA + H(+). It catalyses the reaction L-lysyl-[protein] + acetyl-CoA = N(6)-acetyl-L-lysyl-[protein] + CoA + H(+). The catalysed reaction is propanoyl-CoA + L-lysyl-[protein] = N(6)-propanoyl-L-lysyl-[protein] + CoA + H(+). The acetyltransferase activity is inhibited by anacardic acid derivatives. Histone acetyltransferase that catalyzes histone H4 acetylation at 'Lys-5'- and 'Lys-8' (H4K5ac and H4K8ac) or 'Lys-16' (H4K16ac), depending on the context. Catalytic component of the MSL histone acetyltransferase complex, a multiprotein complex that mediates the majority of histone H4 acetylation at 'Lys-16' (H4K16ac), an epigenetic mark that prevents chromatin compaction. H4K16ac constitutes the only acetylation mark intergenerationally transmitted and regulates key biological processes, such as oogenesis, embryonic stem cell pluripotency, hematopoiesis or glucose metabolism. The MSL complex is required for chromosome stability and genome integrity by maintaining homeostatic levels of H4K16ac. The MSL complex is also involved in gene dosage by promoting up-regulation of genes expressed by the X chromosome. X up-regulation is required to compensate for autosomal biallelic expression. The MSL complex also participates in gene dosage compensation by promoting expression of Tsix non-coding RNA. As part of the NSL histone acetyltransferase complex, catalyzes histone H4 acetylation at 'Lys-5'- and 'Lys-8' (H4K5ac and H4K8ac) at transcription start sites and promotes transcription initiation. The NSL complex also acts as a regulator of gene expression in mitochondria: KAT8 associates with mitochondrial DNA and controls expression of respiratory genes in an acetyltransferase-dependent mechanism. Also functions as an acetyltransferase for non-histone targets, such as ALKBH5, COX17, IRF3, KDM1A/LSD1, LMNA, PAX7 or TP53/p53. Acts as an inhibitor of antiviral immunity by acetylating IRF3, preventing IRF3 recruitment to promoters. Acts as a regulator of asymmetric division in muscle stem cells by mediating acetylation of PAX7. As part of the NSL complex, acetylates TP53/p53 at 'Lys-120'. Acts as a regulator of epithelial-to-mesenchymal transition as part of the NSL complex by mediating acetylation of KDM1A/LSD1. The NSL complex is required for nuclear architecture maintenance by mediating acetylation of LMNA. Promotes mitochondrial integrity by catalyzing acetylation of COX17. In addition to protein acetyltransferase activity, able to mediate protein propionylation. The polypeptide is Histone acetyltransferase KAT8 (Mus musculus (Mouse)).